The following is a 645-amino-acid chain: Acetyl-coenzyme A synthetase (645 aa).

CoA is bound by residues 190-193 and Thr309; that span reads RGGR. ATP-binding positions include 385-387, 409-414, Asp498, and Arg513; these read GEP and DTWWQT. Residue Ser521 participates in CoA binding. Arg524 serves as a coordination point for ATP. Mg(2+) contacts are provided by Val535, His537, and Val540. Arg582 is a CoA binding site. Lys607 is subject to N6-acetyllysine.

It belongs to the ATP-dependent AMP-binding enzyme family. It depends on Mg(2+) as a cofactor. Acetylated. Deacetylation by the SIR2-homolog deacetylase activates the enzyme.

It carries out the reaction acetate + ATP + CoA = acetyl-CoA + AMP + diphosphate. Functionally, catalyzes the conversion of acetate into acetyl-CoA (AcCoA), an essential intermediate at the junction of anabolic and catabolic pathways. AcsA undergoes a two-step reaction. In the first half reaction, AcsA combines acetate with ATP to form acetyl-adenylate (AcAMP) intermediate. In the second half reaction, it can then transfer the acetyl group from AcAMP to the sulfhydryl group of CoA, forming the product AcCoA. This is Acetyl-coenzyme A synthetase from Methylocella silvestris (strain DSM 15510 / CIP 108128 / LMG 27833 / NCIMB 13906 / BL2).